We begin with the raw amino-acid sequence, 174 residues long: Large ribosomal subunit protein uL10 (174 aa).

This sequence belongs to the universal ribosomal protein uL10 family. In terms of assembly, part of the ribosomal stalk of the 50S ribosomal subunit. The N-terminus interacts with L11 and the large rRNA to form the base of the stalk. The C-terminus forms an elongated spine to which L12 dimers bind in a sequential fashion forming a multimeric L10(L12)X complex.

In terms of biological role, forms part of the ribosomal stalk, playing a central role in the interaction of the ribosome with GTP-bound translation factors. The protein is Large ribosomal subunit protein uL10 of Vesicomyosocius okutanii subsp. Calyptogena okutanii (strain HA).